Here is an 897-residue protein sequence, read N- to C-terminus: Leucine--tRNA ligase (897 aa).

The 'HIGH' region motif lies at 49–59 (PYPSGKLHMGH). Residues 654-658 (KMSKS) carry the 'KMSKS' region motif. Residue Lys-657 participates in ATP binding.

Belongs to the class-I aminoacyl-tRNA synthetase family.

It localises to the cytoplasm. The catalysed reaction is tRNA(Leu) + L-leucine + ATP = L-leucyl-tRNA(Leu) + AMP + diphosphate. The sequence is that of Leucine--tRNA ligase from Methylibium petroleiphilum (strain ATCC BAA-1232 / LMG 22953 / PM1).